The sequence spans 108 residues: Nitrogenase-stabilizing/protective protein NifW (108 aa).

This sequence belongs to the NifW family. In terms of assembly, homotrimer; associates with NifD.

Functionally, may protect the nitrogenase Fe-Mo protein from oxidative damage. This Zymomonas mobilis subsp. mobilis (strain ATCC 31821 / ZM4 / CP4) protein is Nitrogenase-stabilizing/protective protein NifW.